The chain runs to 674 residues: Xaa-Pro aminopeptidase 2 (674 aa).

Residues 1 to 22 (MAQAYWQCYPWLVLLCACAWSY) form the signal peptide. N-linked (GlcNAc...) asparagine glycosylation is present at Asn-65. Arg-116 is a binding site for substrate. Asn-278 and Asn-293 each carry an N-linked (GlcNAc...) asparagine glycan. A substrate-binding site is contributed by His-430. Zn(2+) is bound by residues Asp-450, Asp-461, and His-524. Substrate-binding residues include His-524, His-533, and Glu-555. The Zn(2+) site is built by Glu-555 and Glu-569. A lipid anchor (GPI-anchor amidated alanine) is attached at Ala-650. Residues 651-674 (SAPHTTSLASMWVASALAILSWSC) constitute a propeptide, removed in mature form.

It belongs to the peptidase M24B family. As to quaternary structure, homotrimer. It depends on Zn(2+) as a cofactor. N-glycosylated. Expressed strongly in lung, liver and heart, and at lower levels in kidney, testis, brain, spleen and skeletal muscle.

The protein localises to the cell membrane. The enzyme catalyses Release of any N-terminal amino acid, including proline, that is linked to proline, even from a dipeptide or tripeptide.. With respect to regulation, inhibited by the chelating agents 1,10-phenanthroline and EDTA. Inhibited by the thiol-containing compounds 2-mercaptoethanol and dithiothreitol. Also inhibited by apstatin, captopril and p-(ch1oromercuri)benzenesulfonic acid. Weakly inhibited by D,L-2-mercaptomethyl-3-guanidinoethylthiopropanoic acid and N-[l-(R,S)-carboxy-(2-phenylethyl)]-Ala-Ala-Phe-p-aminobenzoate. Inhibited by ramiprilat and enalaprilat, in a Mn(2+)-dependent manner. Metal ions have a complex substrate- and concentration-dependent effect on activity. Activity towards Arg-Pro-Pro and Gly-Pro-Hyp is stimulated by Mn(2+) ion concentrations of 10-100 uM and then inhibited at Mn(2+) concentrations of 1-2 mM. Mn(2+) concentrations in excess of 2 mM stimulate activity towards Gly-Pro-Hyp but inhibit activity towards Arg-Pro-Pro. Zn(2+) and Co(2+) ions also inhibit activity towards Arg-Pro-Pro at high concentrations. Activity towards bradykinin is inhibited by Mn(2+) concentrations in excess of 1 mM. Its function is as follows. Membrane-bound metalloprotease which catalyzes the removal of a penultimate prolyl residue from the N-termini of peptides, such as Arg-Pro-Pro. May play a role in the metabolism of the vasodilator bradykinin. The protein is Xaa-Pro aminopeptidase 2 of Rattus norvegicus (Rat).